The sequence spans 273 residues: Multidrug-efflux transporter 2 regulator (273 aa).

The HTH merR-type domain occupies 8–77 (YFTTGEFSKL…LKEIKCLIKG (70 aa)). Positions 11 to 30 (TGEFSKLCRVKKQTLFHYDE) form a DNA-binding region, H-T-H motif.

Its function is as follows. Activates transcription of the blt gene in response to structurally dissimilar drugs. This Bacillus subtilis (strain 168) protein is Multidrug-efflux transporter 2 regulator (bltR).